Here is a 148-residue protein sequence, read N- to C-terminus: UPF0756 membrane protein YeaL (148 aa).

4 helical membrane-spanning segments follow: residues 14–34 (ALGF…LIIV), 51–71 (LTVG…SGTL), 86–106 (LVAI…VALM), and 121–141 (VLGV…AGLV).

The protein belongs to the UPF0756 family.

It localises to the cell membrane. The chain is UPF0756 membrane protein YeaL from Salmonella arizonae (strain ATCC BAA-731 / CDC346-86 / RSK2980).